A 1005-amino-acid polypeptide reads, in one-letter code: MTLKMFLPVNLVSVCMKLNNSVVMVGLYYGFISAFSIGSSYLFLLRPRFLNDDPDAIEKKASETAGFFTGQLLIFISILYGPLHLALGRPHTILLLLAPYFFFHFLSSNSGQYPSQRFAFPLLTKSMRNRSFQLVFLHSLLFQLFSLSVLGRPMLTRLSYIYIFRSNNKMLFVLSSFVGWLIGHILVLKWAGLVFVWLLKFIRSKTMKYITCNVLIPATKYIIEKWRNSFVAGLIREILAMKQVESALVRIKNSRLLDDVRWWIRGSGLISGLKINIRFYARLILRGFENVYVGAKFRQDMEHLFSIILFAFFLLYLDRTPLLYADPADKKLQLQRKLSNETQAAREEKELEERLTEKFEAQRRAQRAAQRKALQEFKQGVVESYLANQAAKDENQIQAQKDEKQIQAEKKATIRAEQVVQYTFGLIEAQRREMEIEAARAMQEAYKGMLAAEEEDVEEGVQEKQEGFPEEPISPSEEREENPKLLILKEKISILTEKISILTEKNDLFSFEIPIITSLFDPQKPLRPLRYIKTCAGVEKAVKNEMSQYFFYPCRSDGKQRLCFTYPPSLATFWEMIQRKMASRFPRIYTKAKWRALRGSAPGSYRQWISRNKKKKNSLSTEFQNRIQTLDQKKSLLNVLARRKRSSLQNVLETRKRLCNYKTKKEYLPEIADPFLTGALRGKSDPEVYDGVRKTSEIKVVFLKNNITMATLGNKNDDDLREEKNAISLLSRMKNPVNKLHLLFVNERDYPFVKPLVNRINGPAVPKKKKTISKSKQNEIKSKQKKVKSKQKKVKSKQKKVKSKQKKVKSKQNEIKSKQNEIKSKQKKVKRKQNEIKSKLNEVKRKQNEIYPKGVKFNATPKTEINPHGIRFDAATIEKYSFATGYSYRPPSFHDIIFKAFVTEPQRNKKKVIELEEEINKQVPRWSYQLIDELEQLEGAEGETQFSDHEIRILPFKRVSVFTEKEAKKKPLIDEEGNYVRHKKTYAVRFLGHMSDFRRGLIKGS.

The next 6 helical transmembrane spans lie at 25–45 (VGLYYGFISAFSIGSSYLFLL), 67–87 (FFTGQLLIFISILYGPLHLAL), 91–111 (HTILLLLAPYFFFHFLSSNSG), 131–151 (SFQLVFLHSLLFQLFSLSVLG), 177–197 (FVGWLIGHILVLKWAGLVFVW), and 304–324 (LFSIILFAFFLLYLDRTPLLY). Disordered stretches follow at residues 457-481 (VEEGVQEKQEGFPEEPISPSEEREE) and 767-833 (KKKK…KRKQ). Residues 783–810 (KQKKVKSKQKKVKSKQKKVKSKQKKVKS) show a composition bias toward basic residues. Basic and acidic residues predominate over residues 811–824 (KQNEIKSKQNEIKS).

This sequence belongs to the TIC214 family. As to quaternary structure, part of the Tic complex.

The protein resides in the plastid. The protein localises to the chloroplast inner membrane. Involved in protein precursor import into chloroplasts. May be part of an intermediate translocation complex acting as a protein-conducting channel at the inner envelope. This chain is Protein TIC 214, found in Oenothera berteroana (Bertero's evening primrose).